An 840-amino-acid chain; its full sequence is OTU domain-containing protein 7B (840 aa).

A disordered region spans residues Ala-49–Asp-88. Residues Thr-65–Arg-77 show a composition bias toward basic and acidic residues. At Ser-100 the chain carries Phosphoserine. Positions Glu-152–Trp-401 are TRAF-binding. The interval Ala-167–Ser-440 is catalytic. One can recognise an OTU domain in the interval Leu-183–Met-365. The segment at Ala-187–Asn-193 is regulatory loop. Asp-191 is a catalytic residue. The active-site Nucleophile is Cys-194. Catalysis depends on His-358, which acts as the Proton acceptor. Residues Ser-440 to Ala-452 are compositionally biased toward polar residues. Disordered regions lie at residues Ser-440–Glu-592 and Ile-653–Gln-710. Basic and acidic residues-rich tracts occupy residues Asp-456 to Ser-471 and Ser-488 to Asp-500. Phosphoserine is present on residues Ser-464, Ser-467, and Ser-471. Residues Arg-483–Arg-498 carry the Nuclear localization signal motif. Residues Lys-531–Ile-541 are compositionally biased toward gly residues. Thr-730 is modified (phosphothreonine). Residues Pro-793 to Glu-828 form an A20-type zinc finger. Residues Cys-799, Cys-804, Cys-816, and Cys-819 each contribute to the Zn(2+) site.

The protein belongs to the peptidase C64 family. In terms of assembly, interacts with TRAF6. Interacts with PARK7, leading to inhibit deubiquitinase activity. Interacts with EGFR, ITCH and NEDD4. Interacts with TRAF3. Interacts with ZAP70 in activated T cells, but not in resting T cells. Phosphorylated by EGFR.

It localises to the cytoplasm. Its subcellular location is the nucleus. The catalysed reaction is Thiol-dependent hydrolysis of ester, thioester, amide, peptide and isopeptide bonds formed by the C-terminal Gly of ubiquitin (a 76-residue protein attached to proteins as an intracellular targeting signal).. Deubiquitinase activity is inhibited following interaction with PARK7. In terms of biological role, negative regulator of the non-canonical NF-kappa-B pathway that acts by mediating deubiquitination of TRAF3, an inhibitor of the NF-kappa-B pathway, thereby acting as a negative regulator of B-cell responses. In response to non-canonical NF-kappa-B stimuli, deubiquitinates 'Lys-48'-linked polyubiquitin chains of TRAF3, preventing TRAF3 proteolysis and over-activation of non-canonical NF-kappa-B. Negatively regulates mucosal immunity against infections. Deubiquitinates ZAP70, and thereby regulates T cell receptor (TCR) signaling that leads to the activation of NF-kappa-B. Plays a role in T cell homeostasis and is required for normal T cell responses, including production of IFNG and IL2. Mediates deubiquitination of EGFR. Has deubiquitinating activity toward 'Lys-11', 'Lys-48' and 'Lys-63'-linked polyubiquitin chains. Has a much higher catalytic rate with 'Lys-11'-linked polyubiquitin chains (in vitro); however the physiological significance of these data are unsure. Hydrolyzes both linear and branched forms of polyubiquitin. Acts as a regulator of mTORC1 and mTORC2 assembly by mediating 'Lys-63'-linked deubiquitination of MLST8, thereby promoting assembly of the mTORC2 complex, while inibiting formation of the mTORC1 complex. This chain is OTU domain-containing protein 7B (Otud7b), found in Mus musculus (Mouse).